Consider the following 828-residue polypeptide: Periplasmic nitrate reductase (828 aa).

The segment at residues 1–31 (MKLSRRSFMKANAVAAVAAAAGLSVPGVARA) is a signal peptide (tat-type signal). In terms of domain architecture, 4Fe-4S Mo/W bis-MGD-type spans 39 to 95 (IKWDKAPCRFCGTGCGVLVGTQQGRVVACQGDPDAPVNRGLNCIKGYFLPKIMYGKD). [4Fe-4S] cluster-binding residues include C46, C49, C53, and C81. Residues K83, Q150, N175, C179, 212–219 (WGANMAEM), 243–247 (STYQH), 262–264 (QSD), M372, Q376, N482, 508–509 (SD), K531, D558, and 718–727 (TGRVLEHWHT) contribute to the Mo-bis(molybdopterin guanine dinucleotide) site. F794 provides a ligand contact to substrate. Residues N802 and K819 each coordinate Mo-bis(molybdopterin guanine dinucleotide).

Belongs to the prokaryotic molybdopterin-containing oxidoreductase family. NasA/NapA/NarB subfamily. Component of the periplasmic nitrate reductase NapAB complex composed of NapA and NapB. Requires [4Fe-4S] cluster as cofactor. Mo-bis(molybdopterin guanine dinucleotide) serves as cofactor. Predicted to be exported by the Tat system. The position of the signal peptide cleavage has not been experimentally proven.

The protein resides in the periplasm. The catalysed reaction is 2 Fe(II)-[cytochrome] + nitrate + 2 H(+) = 2 Fe(III)-[cytochrome] + nitrite + H2O. Functionally, catalytic subunit of the periplasmic nitrate reductase complex NapAB. Receives electrons from NapB and catalyzes the reduction of nitrate to nitrite. This Shigella boydii serotype 4 (strain Sb227) protein is Periplasmic nitrate reductase.